The following is a 356-amino-acid chain: UDP-N-acetylglucosamine--N-acetylmuramyl-(pentapeptide) pyrophosphoryl-undecaprenol N-acetylglucosamine transferase (356 aa).

UDP-N-acetyl-alpha-D-glucosamine is bound by residues arginine 166, serine 196, and glutamine 290.

This sequence belongs to the glycosyltransferase 28 family. MurG subfamily.

It is found in the cell membrane. It catalyses the reaction Mur2Ac(oyl-L-Ala-gamma-D-Glu-L-Lys-D-Ala-D-Ala)-di-trans,octa-cis-undecaprenyl diphosphate + UDP-N-acetyl-alpha-D-glucosamine = beta-D-GlcNAc-(1-&gt;4)-Mur2Ac(oyl-L-Ala-gamma-D-Glu-L-Lys-D-Ala-D-Ala)-di-trans,octa-cis-undecaprenyl diphosphate + UDP + H(+). It functions in the pathway cell wall biogenesis; peptidoglycan biosynthesis. Cell wall formation. Catalyzes the transfer of a GlcNAc subunit on undecaprenyl-pyrophosphoryl-MurNAc-pentapeptide (lipid intermediate I) to form undecaprenyl-pyrophosphoryl-MurNAc-(pentapeptide)GlcNAc (lipid intermediate II). This is UDP-N-acetylglucosamine--N-acetylmuramyl-(pentapeptide) pyrophosphoryl-undecaprenol N-acetylglucosamine transferase from Staphylococcus aureus (strain MRSA252).